The following is a 211-amino-acid chain: Small ribosomal subunit protein uS5 (211 aa).

The 64-residue stretch at 58 to 121 (FEERIVKLKR…KKAHNSIHTV (64 aa)) folds into the S5 DRBM domain.

It belongs to the universal ribosomal protein uS5 family. In terms of assembly, part of the 30S ribosomal subunit. Contacts proteins S4 and S8.

Functionally, with S4 and S12 plays an important role in translational accuracy. In terms of biological role, located at the back of the 30S subunit body where it stabilizes the conformation of the head with respect to the body. This Mycoplasma genitalium (strain ATCC 33530 / DSM 19775 / NCTC 10195 / G37) (Mycoplasmoides genitalium) protein is Small ribosomal subunit protein uS5.